A 142-amino-acid polypeptide reads, in one-letter code: MGQGKFAARKLKRDSARFRWSDPHFARTAGGLKLKSDPLEGAPQGRGIVLEKIGVEAKQPNSAIRKCVRVQLIKNGRQVSAFAVGDGAINFIDEHDEVEIEGIGGRLGRSMGDIPGVRFVVTKVNNVCLHELVIGRKEKPRR.

This sequence belongs to the universal ribosomal protein uS12 family. In terms of assembly, part of the 30S ribosomal subunit.

With S4 and S5 plays an important role in translational accuracy. Located at the interface of the 30S and 50S subunits. This Methanospirillum hungatei JF-1 (strain ATCC 27890 / DSM 864 / NBRC 100397 / JF-1) protein is Small ribosomal subunit protein uS12.